Here is a 224-residue protein sequence, read N- to C-terminus: uncharacterized protein (224 aa).

This is an uncharacterized protein from Acidianus hospitalis (AFV-1).